The sequence spans 96 residues: Large ribosomal subunit protein bL27 (96 aa).

Residues 1–9 (MLKFDIQHF) constitute a propeptide that is removed on maturation. The disordered stretch occupies residues 1-33 (MLKFDIQHFAHKKGGGSTSNGRDSESKRLGAKR). A compositionally biased stretch (basic and acidic residues) spans 22–33 (RDSESKRLGAKR).

This sequence belongs to the bacterial ribosomal protein bL27 family. The N-terminus is cleaved by ribosomal processing cysteine protease Prp.

This is Large ribosomal subunit protein bL27 from Listeria innocua serovar 6a (strain ATCC BAA-680 / CLIP 11262).